The sequence spans 130 residues: B1 protein (130 aa).

An N-terminal signal peptide occupies residues 1 to 12 (LTSLILLVAVQA). Cystine bridges form between Cys28–Cys59 and Cys99–Cys116.

The protein belongs to the PBP/GOBP family. In terms of processing, N-glycosylated. As to expression, tubular accessory sex gland.

The protein resides in the secreted. Its function is as follows. May be a carrier protein for lipids. This Tenebrio molitor (Yellow mealworm beetle) protein is B1 protein.